Consider the following 384-residue polypeptide: N-acetyldiaminopimelate deacetylase (384 aa).

The active site involves D73. E132 acts as the Proton acceptor in catalysis.

The protein belongs to the peptidase M20A family. N-acetyldiaminopimelate deacetylase subfamily.

It catalyses the reaction N-acetyl-(2S,6S)-2,6-diaminopimelate + H2O = (2S,6S)-2,6-diaminopimelate + acetate. It participates in amino-acid biosynthesis; L-lysine biosynthesis via DAP pathway; LL-2,6-diaminopimelate from (S)-tetrahydrodipicolinate (acetylase route): step 3/3. In terms of biological role, catalyzes the conversion of N-acetyl-diaminopimelate to diaminopimelate and acetate. The protein is N-acetyldiaminopimelate deacetylase of Limosilactobacillus fermentum (strain NBRC 3956 / LMG 18251) (Lactobacillus fermentum).